A 121-amino-acid chain; its full sequence is UPF0102 protein BF0706 (121 aa).

It belongs to the UPF0102 family.

The chain is UPF0102 protein BF0706 from Bacteroides fragilis (strain YCH46).